The sequence spans 353 residues: Photosystem II protein D1 (353 aa).

The residue at position 2 (Thr2) is an N-acetylthreonine. Thr2 is modified (phosphothreonine). Helical transmembrane passes span 29 to 46, 118 to 133, and 142 to 156; these read YIGW…TATS, HFLL…EWEL, and WIAV…AATA. Position 118 (His118) interacts with chlorophyll a. Tyr126 is a pheophytin a binding site. [CaMn4O5] cluster contacts are provided by Asp170 and Glu189. The helical transmembrane segment at 197 to 218 threads the bilayer; sequence FHMLGVAGVFGGSLFSAMHGSL. His198 contacts chlorophyll a. Residues His215 and 264–265 contribute to the a quinone site; that span reads SF. Residue His215 participates in Fe cation binding. His272 contributes to the Fe cation binding site. Residues 274 to 288 traverse the membrane as a helical segment; sequence FLAAWPVVGIWFTSL. [CaMn4O5] cluster-binding residues include His332, Glu333, Asp342, and Ala344. Positions 345–353 are excised as a propeptide; sequence AIDAPSVNG.

This sequence belongs to the reaction center PufL/M/PsbA/D family. PSII is composed of 1 copy each of membrane proteins PsbA, PsbB, PsbC, PsbD, PsbE, PsbF, PsbH, PsbI, PsbJ, PsbK, PsbL, PsbM, PsbT, PsbX, PsbY, PsbZ, Psb30/Ycf12, at least 3 peripheral proteins of the oxygen-evolving complex and a large number of cofactors. It forms dimeric complexes. The D1/D2 heterodimer binds P680, chlorophylls that are the primary electron donor of PSII, and subsequent electron acceptors. It shares a non-heme iron and each subunit binds pheophytin, quinone, additional chlorophylls, carotenoids and lipids. D1 provides most of the ligands for the Mn4-Ca-O5 cluster of the oxygen-evolving complex (OEC). There is also a Cl(-1) ion associated with D1 and D2, which is required for oxygen evolution. The PSII complex binds additional chlorophylls, carotenoids and specific lipids. serves as cofactor. Post-translationally, tyr-161 forms a radical intermediate that is referred to as redox-active TyrZ, YZ or Y-Z. In terms of processing, C-terminally processed by CTPA; processing is essential to allow assembly of the oxygen-evolving complex and thus photosynthetic growth.

It localises to the plastid. The protein localises to the chloroplast thylakoid membrane. It catalyses the reaction 2 a plastoquinone + 4 hnu + 2 H2O = 2 a plastoquinol + O2. In terms of biological role, photosystem II (PSII) is a light-driven water:plastoquinone oxidoreductase that uses light energy to abstract electrons from H(2)O, generating O(2) and a proton gradient subsequently used for ATP formation. It consists of a core antenna complex that captures photons, and an electron transfer chain that converts photonic excitation into a charge separation. The D1/D2 (PsbA/PsbD) reaction center heterodimer binds P680, the primary electron donor of PSII as well as several subsequent electron acceptors. The sequence is that of Photosystem II protein D1 from Coffea arabica (Arabian coffee).